Here is a 251-residue protein sequence, read N- to C-terminus: 3-deoxy-manno-octulosonate cytidylyltransferase (251 aa).

The protein belongs to the KdsB family.

It localises to the cytoplasm. The enzyme catalyses 3-deoxy-alpha-D-manno-oct-2-ulosonate + CTP = CMP-3-deoxy-beta-D-manno-octulosonate + diphosphate. It participates in nucleotide-sugar biosynthesis; CMP-3-deoxy-D-manno-octulosonate biosynthesis; CMP-3-deoxy-D-manno-octulosonate from 3-deoxy-D-manno-octulosonate and CTP: step 1/1. It functions in the pathway bacterial outer membrane biogenesis; lipopolysaccharide biosynthesis. Functionally, activates KDO (a required 8-carbon sugar) for incorporation into bacterial lipopolysaccharide in Gram-negative bacteria. The polypeptide is 3-deoxy-manno-octulosonate cytidylyltransferase (Brucella canis (strain ATCC 23365 / NCTC 10854 / RM-666)).